A 293-amino-acid polypeptide reads, in one-letter code: NAD kinase (293 aa).

D73 (proton acceptor) is an active-site residue. NAD(+) is bound by residues 73 to 74, 147 to 148, H158, R175, D177, 188 to 193, and Q248; these read DG, NE, and TAYSLS.

This sequence belongs to the NAD kinase family. The cofactor is a divalent metal cation.

The protein localises to the cytoplasm. The enzyme catalyses NAD(+) + ATP = ADP + NADP(+) + H(+). Its function is as follows. Involved in the regulation of the intracellular balance of NAD and NADP, and is a key enzyme in the biosynthesis of NADP. Catalyzes specifically the phosphorylation on 2'-hydroxyl of the adenosine moiety of NAD to yield NADP. This chain is NAD kinase, found in Photobacterium profundum (strain SS9).